Here is a 359-residue protein sequence, read N- to C-terminus: 3-dehydroquinate synthase (359 aa).

NAD(+)-binding positions include 69–74 (DAEDGK), 103–107 (GAVTD), 127–128 (TT), K140, and K149. Residues E182, H244, and H260 each coordinate Zn(2+).

It belongs to the sugar phosphate cyclases superfamily. Dehydroquinate synthase family. The cofactor is NAD(+). It depends on Co(2+) as a cofactor. Zn(2+) is required as a cofactor.

Its subcellular location is the cytoplasm. The catalysed reaction is 7-phospho-2-dehydro-3-deoxy-D-arabino-heptonate = 3-dehydroquinate + phosphate. Its pathway is metabolic intermediate biosynthesis; chorismate biosynthesis; chorismate from D-erythrose 4-phosphate and phosphoenolpyruvate: step 2/7. Catalyzes the conversion of 3-deoxy-D-arabino-heptulosonate 7-phosphate (DAHP) to dehydroquinate (DHQ). This Corynebacterium pseudotuberculosis (strain C231) protein is 3-dehydroquinate synthase.